Here is a 350-residue protein sequence, read N- to C-terminus: Small ribosomal subunit biogenesis GTPase RsgA (350 aa).

The segment covering 1–17 (MSKNKLSKGQQRRVNAN) has biased composition (polar residues). The tract at residues 1 to 24 (MSKNKLSKGQQRRVNANHQRRLKT) is disordered. The region spanning 104–273 (TSVLTRPDFY…VIDSPGVREF (170 aa)) is the CP-type G domain. GTP contacts are provided by residues 160-163 (NKID) and 214-222 (GQSGVGKSS). Residues Cys297, Cys302, His304, and Cys310 each coordinate Zn(2+).

Belongs to the TRAFAC class YlqF/YawG GTPase family. RsgA subfamily. As to quaternary structure, monomer. Associates with 30S ribosomal subunit, binds 16S rRNA. It depends on Zn(2+) as a cofactor.

The protein resides in the cytoplasm. In terms of biological role, one of several proteins that assist in the late maturation steps of the functional core of the 30S ribosomal subunit. Helps release RbfA from mature subunits. May play a role in the assembly of ribosomal proteins into the subunit. Circularly permuted GTPase that catalyzes slow GTP hydrolysis, GTPase activity is stimulated by the 30S ribosomal subunit. This is Small ribosomal subunit biogenesis GTPase RsgA from Salmonella schwarzengrund (strain CVM19633).